Consider the following 326-residue polypeptide: ATP synthase gamma chain (326 aa).

This sequence belongs to the ATPase gamma chain family. F-type ATPases have 2 components, CF(1) - the catalytic core - and CF(0) - the membrane proton channel. CF(1) has five subunits: alpha(3), beta(3), gamma(1), delta(1), epsilon(1). CF(0) has three main subunits: a, b and c.

It localises to the cell membrane. Its function is as follows. Produces ATP from ADP in the presence of a proton gradient across the membrane. The gamma chain is believed to be important in regulating ATPase activity and the flow of protons through the CF(0) complex. The protein is ATP synthase gamma chain of Rhodococcus opacus (strain B4).